A 224-amino-acid chain; its full sequence is Inhibitor of apoptosis protein (224 aa).

One copy of the BIR repeat lies at 29–92; it reads IDARNQSFAI…GFWSRNCGFM (64 aa). Zn(2+)-binding residues include cysteine 62, cysteine 65, histidine 82, and cysteine 89.

This sequence belongs to the asfivirus IAP family. Interacts with subunit p17 of host CASP3.

It is found in the host cytoplasm. The protein localises to the virion. In terms of biological role, prevent apoptosis of host cell by inhibiting caspase-3/CASP3 activation to promote the viral replication. Also induces the activation of host NF-kappaB. This chain is Inhibitor of apoptosis protein (p27), found in African swine fever virus (isolate Pig/Haiti/H811/1981) (ASFV).